Reading from the N-terminus, the 596-residue chain is Membrane protein insertase YidC (596 aa).

The next 6 helical transmembrane spans lie at 4 to 24, 332 to 352, 359 to 379, 425 to 445, 468 to 488, and 518 to 538; these read NKLI…HFFD, LGWP…FSFI, YGLV…PLSY, LSGC…FNFF, IINL…FTLL, and PITF…YYFV. Positions 565–584 are enriched in basic and acidic residues; the sequence is KNKEKSANNKEGSFKKRFQD. A disordered region spans residues 565–596; sequence KNKEKSANNKEGSFKKRFQDAIKASASHKGKK.

It belongs to the OXA1/ALB3/YidC family. Type 1 subfamily. In terms of assembly, interacts with the Sec translocase complex via SecD. Specifically interacts with transmembrane segments of nascent integral membrane proteins during membrane integration.

Its subcellular location is the cell inner membrane. Required for the insertion and/or proper folding and/or complex formation of integral membrane proteins into the membrane. Involved in integration of membrane proteins that insert both dependently and independently of the Sec translocase complex, as well as at least some lipoproteins. Aids folding of multispanning membrane proteins. The protein is Membrane protein insertase YidC of Amoebophilus asiaticus (strain 5a2).